We begin with the raw amino-acid sequence, 88 residues long: Protein GOLVEN 10 (88 aa).

The N-terminal stretch at 1–22 (MSSIHVASMILLLFLFLHHSDS) is a signal peptide. Positions 23-75 (RHLDNVHITASRFSLVKDQNVVSSSTSKEPVKVSRFVPGPLKHHHRRPPLLFA) are excised as a propeptide. A disordered region spans residues 44–88 (VSSSTSKEPVKVSRFVPGPLKHHHRRPPLLFADYPKPSTRPPRHN). Tyrosine 77 is modified (sulfotyrosine). Position 85 is a hydroxyproline (proline 85).

The protein belongs to the RGF family. In terms of assembly, binds to LRR receptor-like serine/threonine-protein kinases RGI1, RGI2 and RGI3 to trigger their dimerization with SERK proteins and subsequent signaling. Expressed in roots, shoots, leaves and flowers.

It localises to the secreted. It is found in the endoplasmic reticulum. In terms of biological role, signaling peptide (root growth factor) that maintains the postembryonic root stem cell niche. Regulates the pattern of root growth and lateral root development by modulating the length and the number of cortical cells in the root apical meristem (RAM), and the anticlinal asymmetric cell divisions in lateral root initiation cells. The chain is Protein GOLVEN 10 from Arabidopsis thaliana (Mouse-ear cress).